A 657-amino-acid chain; its full sequence is Hemocyanin (657 aa).

A glycan (N-linked (GlcNAc...) asparagine) is linked at asparagine 167. Cu cation-binding residues include histidine 194, histidine 198, histidine 224, histidine 344, histidine 348, and histidine 384. Intrachain disulfides connect cysteine 483-cysteine 502 and cysteine 562-cysteine 609.

It belongs to the tyrosinase family. Hemocyanin subfamily. As to quaternary structure, it consists of at least four very similar subunits. Hemolymph.

Its subcellular location is the secreted. The protein resides in the extracellular space. Its function is as follows. Hemocyanins are copper-containing oxygen carriers occurring freely dissolved in the hemolymph of many mollusks and arthropods. The sequence is that of Hemocyanin from Palinurus vulgaris (European spiny lobster).